Here is a 231-residue protein sequence, read N- to C-terminus: Large ribosomal subunit protein uL1 (231 aa).

It belongs to the universal ribosomal protein uL1 family. In terms of assembly, part of the 50S ribosomal subunit.

Its function is as follows. Binds directly to 23S rRNA. The L1 stalk is quite mobile in the ribosome, and is involved in E site tRNA release. Functionally, protein L1 is also a translational repressor protein, it controls the translation of the L11 operon by binding to its mRNA. This Caldanaerobacter subterraneus subsp. tengcongensis (strain DSM 15242 / JCM 11007 / NBRC 100824 / MB4) (Thermoanaerobacter tengcongensis) protein is Large ribosomal subunit protein uL1.